The chain runs to 335 residues: S-adenosylmethionine decarboxylase proenzyme (335 aa).

Residues Glu12 and Glu15 contribute to the active site. Ser70 acts as the Schiff-base intermediate with substrate; via pyruvic acid in catalysis. Ser70 carries the post-translational modification Pyruvic acid (Ser); by autocatalysis. Cys84 functions as the Proton donor; for catalytic activity in the catalytic mechanism. Active-site proton acceptor; for processing activity residues include Ser231 and His245.

The protein belongs to the eukaryotic AdoMetDC family. The cofactor is pyruvate. Is synthesized initially as an inactive proenzyme. Formation of the active enzyme involves a self-maturation process in which the active site pyruvoyl group is generated from an internal serine residue via an autocatalytic post-translational modification. Two non-identical subunits are generated from the proenzyme in this reaction, and the pyruvate is formed at the N-terminus of the alpha chain, which is derived from the carboxyl end of the proenzyme. The post-translation cleavage follows an unusual pathway, termed non-hydrolytic serinolysis, in which the side chain hydroxyl group of the serine supplies its oxygen atom to form the C-terminus of the beta chain, while the remainder of the serine residue undergoes an oxidative deamination to produce ammonia and the pyruvoyl group blocking the N-terminus of the alpha chain.

It carries out the reaction S-adenosyl-L-methionine + H(+) = S-adenosyl 3-(methylsulfanyl)propylamine + CO2. Its pathway is amine and polyamine biosynthesis; S-adenosylmethioninamine biosynthesis; S-adenosylmethioninamine from S-adenosyl-L-methionine: step 1/1. Its function is as follows. Essential for biosynthesis of the polyamines spermidine and spermine. Promotes maintenance and self-renewal of embryonic stem cells, by maintaining spermine levels. The protein is S-adenosylmethionine decarboxylase proenzyme (amd1) of Xenopus laevis (African clawed frog).